A 619-amino-acid chain; its full sequence is 1-deoxy-D-xylulose-5-phosphate synthase (619 aa).

Thiamine diphosphate is bound by residues histidine 76 and 117–119 (AHS). Aspartate 148 is a Mg(2+) binding site. Residues 149-150 (GA), asparagine 177, tyrosine 284, and glutamate 366 each bind thiamine diphosphate. Asparagine 177 contacts Mg(2+).

This sequence belongs to the transketolase family. DXPS subfamily. Homodimer. It depends on Mg(2+) as a cofactor. Requires thiamine diphosphate as cofactor.

The catalysed reaction is D-glyceraldehyde 3-phosphate + pyruvate + H(+) = 1-deoxy-D-xylulose 5-phosphate + CO2. The protein operates within metabolic intermediate biosynthesis; 1-deoxy-D-xylulose 5-phosphate biosynthesis; 1-deoxy-D-xylulose 5-phosphate from D-glyceraldehyde 3-phosphate and pyruvate: step 1/1. Its function is as follows. Catalyzes the acyloin condensation reaction between C atoms 2 and 3 of pyruvate and glyceraldehyde 3-phosphate to yield 1-deoxy-D-xylulose-5-phosphate (DXP). The sequence is that of 1-deoxy-D-xylulose-5-phosphate synthase from Azoarcus sp. (strain BH72).